We begin with the raw amino-acid sequence, 796 residues long: Protein tyrosine phosphatase domain-containing protein 1 (796 aa).

The region spanning 126–297 is the Tyrosine-protein phosphatase domain; the sequence is YSSWVTDNIL…LIPLRNIFSC (172 aa). Cys234 serves as the catalytic Phosphocysteine intermediate. Phosphoserine occurs at positions 435 and 437.

Belongs to the protein-tyrosine phosphatase family. Non-receptor class PTPDC1 subfamily.

May play roles in cilia formation and/or maintenance. In Bos taurus (Bovine), this protein is Protein tyrosine phosphatase domain-containing protein 1 (PTPDC1).